We begin with the raw amino-acid sequence, 266 residues long: DNA primase (266 aa).

The disordered stretch occupies residues 244-266 (VTTTTTPSPPKIGSMQTTTKSTT). A compositionally biased stretch (polar residues) spans 257-266 (SMQTTTKSTT).

Belongs to the baculoviridae LEF-1 family. As to quaternary structure, interacts with LEF-2.

Plays an essential role in viral DNA replication. May generates single-stranded DNA for both leading and lagging strand synthesis. The primase initiates primer synthesis and thereby produces large amount of short RNA primers on the lagging strand that the polymerase elongates using dNTPs. This is DNA primase (LEF-1) from Autographa californica nuclear polyhedrosis virus (AcMNPV).